Here is a 160-residue protein sequence, read N- to C-terminus: Small ribosomal subunit protein uS17m (160 aa).

It belongs to the universal ribosomal protein uS17 family. As to quaternary structure, component of the mitochondrial ribosome small subunit (28S) which comprises a 12S rRNA and about 30 distinct proteins.

It is found in the mitochondrion. This Caenorhabditis elegans protein is Small ribosomal subunit protein uS17m (mrps-17).